Consider the following 93-residue polypeptide: Stage III sporulation protein D (93 aa).

The region spanning 4-75 (YIKERTIKIG…IRHLRGGEAT (72 aa)) is the HTH deoR-type domain. Positions 21-40 (KTVRVIAKEFGVSKSTVHKD) form a DNA-binding region, H-T-H motif.

Its function is as follows. This protein regulates the transcription of sigK, which encodes mother cell chamber RNA polymerase sigma-factor (sigma K). This is Stage III sporulation protein D (spoIIID) from Bacillus subtilis (strain 168).